Reading from the N-terminus, the 151-residue chain is MKQIELKILDPRIGKEFPLPEHATAGSAGMDLRACIDQALIIKPGETQLIPTGIAIHISDPGLAATILPRSGLGHKHGIVLGNLVGLIDSDYQGPLMVSCWNRSTESFRLEPGERLAQLVFLPVVQATFEIVDEFKSSERGEGGFGHSGKH.

Residues 70–72 (RSG), N83, 87–89 (LID), and M97 contribute to the substrate site.

This sequence belongs to the dUTPase family. It depends on Mg(2+) as a cofactor.

The catalysed reaction is dUTP + H2O = dUMP + diphosphate + H(+). It functions in the pathway pyrimidine metabolism; dUMP biosynthesis; dUMP from dCTP (dUTP route): step 2/2. Functionally, this enzyme is involved in nucleotide metabolism: it produces dUMP, the immediate precursor of thymidine nucleotides and it decreases the intracellular concentration of dUTP so that uracil cannot be incorporated into DNA. The chain is Deoxyuridine 5'-triphosphate nucleotidohydrolase from Psychromonas ingrahamii (strain DSM 17664 / CCUG 51855 / 37).